We begin with the raw amino-acid sequence, 167 residues long: Centrin-3 (167 aa).

EF-hand domains lie at 25–60 (EQKQEIKDAFELFDTDKDEAIDYHELKVAMRALGFD), 61–96 (VKKADVLKILKDYDREATGKITFEDFNEVVTDWILE), 98–133 (DPHEEILKAFKLFDDDDSGKISLRNLRRVARELGEN), and 134–167 (MSDEELRAMIEEFDKDGDGEINQEEFIAIMTGDI). The residue at position 135 (Ser135) is a Phosphoserine. Ca(2+)-binding residues include Asp147, Asp149, Asp151, Glu153, and Glu158.

It belongs to the centrin family. In terms of assembly, monomer. Component of the nuclear pore complex (NPC)-associated TREX-2 complex (transcription and export complex 2), composed of at least GANP, 2 copies of ENY2, PCID2, SEM1/DSS1, and either centrin CETN2 or centrin CETN3. The TREX-2 complex also associates with ALYREF/ALY and with the nucleoporin NUP153. Interacts with USP49.

It is found in the cytoplasm. It localises to the cytoskeleton. The protein localises to the microtubule organizing center. The protein resides in the centrosome. Its subcellular location is the nucleus. It is found in the nucleolus. It localises to the nucleus envelope. The protein localises to the nuclear pore complex. The protein resides in the centriole. Functionally, plays a fundamental role in microtubule-organizing center structure and function. Its function is as follows. As a component of the TREX-2 complex, involved in the export of mRNAs to the cytoplasm through the nuclear pores. The polypeptide is Centrin-3 (CETN3) (Homo sapiens (Human)).